A 314-amino-acid chain; its full sequence is 2-methoxy-6-polyprenyl-1,4-benzoquinol methylase, mitochondrial (314 aa).

Residues 1-19 (MLQSLNRSVRYLSTSIGSR) constitute a mitochondrion transit peptide. S-adenosyl-L-methionine is bound by residues T109, D154, 186–187 (NS), and S203.

This sequence belongs to the class I-like SAM-binding methyltransferase superfamily. MenG/UbiE family. As to quaternary structure, component of a multi-subunit COQ enzyme complex.

It is found in the mitochondrion inner membrane. It catalyses the reaction a 2-methoxy-6-(all-trans-polyprenyl)benzene-1,4-diol + S-adenosyl-L-methionine = a 5-methoxy-2-methyl-3-(all-trans-polyprenyl)benzene-1,4-diol + S-adenosyl-L-homocysteine + H(+). It participates in cofactor biosynthesis; ubiquinone biosynthesis. Functionally, methyltransferase required for the conversion of 2-polyprenyl-6-methoxy-1,4-benzoquinol (DDMQH2) to 2-polyprenyl-3-methyl-6-methoxy-1,4-benzoquinol (DMQH2). This chain is 2-methoxy-6-polyprenyl-1,4-benzoquinol methylase, mitochondrial, found in Dictyostelium discoideum (Social amoeba).